The chain runs to 107 residues: Probable antitoxin TacA (107 aa).

Belongs to the TacA antitoxin family. Forms a complex with cognate antitoxin TacT.

In terms of biological role, probable antitoxin component of a type II toxin-antitoxin (TA) system. Should neutralize cognate toxin TacT (y4aS). The chain is Probable antitoxin TacA from Sinorhizobium fredii (strain NBRC 101917 / NGR234).